The primary structure comprises 549 residues: Cytoplasmic trehalase (549 aa).

Residues Arg168, 175–176 (WD), Asn212, 221–223 (RSQ), 292–294 (RDE), and Gly324 each bind substrate. Active-site proton donor/acceptor residues include Asp326 and Glu509. Glu525 contacts substrate.

It belongs to the glycosyl hydrolase 37 family. Monomer.

The protein localises to the cytoplasm. The enzyme catalyses alpha,alpha-trehalose + H2O = alpha-D-glucose + beta-D-glucose. It functions in the pathway glycan degradation; trehalose degradation; D-glucose from alpha,alpha-trehalose: step 1/1. Hydrolyzes trehalose to glucose. Could be involved, in cells returning to low osmolarity conditions, in the utilization of the accumulated cytoplasmic trehalose, which was synthesized in response to high osmolarity. The protein is Cytoplasmic trehalase of Escherichia coli O127:H6 (strain E2348/69 / EPEC).